The following is a 550-amino-acid chain: Solute carrier family 22 member 6 (550 aa).

The Cytoplasmic segment spans residues 1–9; the sequence is MAFNDLLQQ. Residues 10 to 30 traverse the membrane as a helical segment; sequence VGGVGRFQQIQVTLVVLPLLL. Residues 31 to 135 lie on the Extracellular side of the membrane; that stretch reads MASHNTVQNF…LVCSHRALRQ (105 aa). 3 N-linked (GlcNAc...) asparagine glycosylation sites follow: Asn56, Asn92, and Asn113. Residues 136–156 form a helical membrane-spanning segment; that stretch reads LAQSLYMVGVLLGAMVFGYLA. Over 157–164 the chain is Cytoplasmic; sequence DRLGRRKV. A helical transmembrane segment spans residues 165 to 187; it reads LILNYLQTAVSGTCAAFAPNFPI. Residues 188–190 are Extracellular-facing; that stretch reads YCA. The chain crosses the membrane as a helical span at residues 191-213; that stretch reads FRLLSGMSLAGIALNCMTLNVEW. Residues 214–224 lie on the Cytoplasmic side of the membrane; it reads MPIHTRACVGT. A helical transmembrane segment spans residues 225 to 245; sequence LIGYVYSLGQFLLAGVAYAVP. Residues 246-248 are Extracellular-facing; it reads HWR. Residues 249–269 traverse the membrane as a helical segment; that stretch reads HLQLLISVPFFAFFIYSWFFI. At 270 to 337 the chain is on the cytoplasmic side; it reads ESARWHSSSG…ELLRCPTLRH (68 aa). A helical transmembrane segment spans residues 338–358; the sequence is LFLCLSMLWFATSFAYYGLVM. Residues 359-368 are Extracellular-facing; sequence DLQGFGVSIY. The helical transmembrane segment at 369-389 threads the bilayer; the sequence is LIQVIFGAVDLPAKLVGFLVI. The Cytoplasmic segment spans residues 390–395; the sequence is NSLGRR. A helical membrane pass occupies residues 396-416; that stretch reads PAQMAALLLAGICILLNGVVP. The Extracellular segment spans residues 417 to 425; sequence QDQSVIRTS. A helical transmembrane segment spans residues 426 to 446; it reads LAVLGKGCLAASFNCIFLYTG. The Cytoplasmic portion of the chain corresponds to 447–456; sequence ELYPTMIRQT. Residues 457 to 477 traverse the membrane as a helical segment; that stretch reads GLGMGSTMARVGSIVSPLVSM. Over 478–484 the chain is Extracellular; the sequence is TTELYPS. Residues 485 to 505 form a helical membrane-spanning segment; it reads VPLFIYGAVPVAASAVTVLLP. Residues 506 to 550 lie on the Cytoplasmic side of the membrane; that stretch reads ETLGQPLPDTVQDLESRKGKQTPQQQEHQKYMVPLQASAQEKNGL. The interval 513-550 is disordered; the sequence is PDTVQDLESRKGKQTPQQQEHQKYMVPLQASAQEKNGL.

It belongs to the major facilitator (TC 2.A.1) superfamily. Organic cation transporter (TC 2.A.1.19) family. In terms of processing, glycosylated. Glycosylation is necessary for proper targeting of the transporter to the plasma membrane. Expressed in kidney; in the basolateral membrane of the proximal tubule.

It localises to the basolateral cell membrane. Its subcellular location is the basal cell membrane. The catalysed reaction is (6R)-L-erythro-5,6,7,8-tetrahydrobiopterin(out) + a dicarboxylate(in) = (6R)-L-erythro-5,6,7,8-tetrahydrobiopterin(in) + a dicarboxylate(out). The enzyme catalyses L-erythro-7,8-dihydrobiopterin(out) + a dicarboxylate(in) = L-erythro-7,8-dihydrobiopterin(in) + a dicarboxylate(out). It catalyses the reaction L-sepiapterin(out) + a dicarboxylate(in) = L-sepiapterin(in) + a dicarboxylate(out). It carries out the reaction prostaglandin F2alpha(out) + a dicarboxylate(in) = prostaglandin F2alpha(in) + a dicarboxylate(out). The catalysed reaction is prostaglandin E2(out) + a dicarboxylate(in) = prostaglandin E2(in) + a dicarboxylate(out). The enzyme catalyses 3',5'-cyclic AMP(out) + a dicarboxylate(in) = 3',5'-cyclic AMP(in) + a dicarboxylate(out). It catalyses the reaction 3',5'-cyclic GMP(out) + a dicarboxylate(in) = 3',5'-cyclic GMP(in) + a dicarboxylate(out). It carries out the reaction urate(out) + a dicarboxylate(in) = urate(in) + a dicarboxylate(out). The catalysed reaction is kynurenate(out) + glutarate(in) = kynurenate(in) + glutarate(out). The enzyme catalyses (indol-3-yl)acetate(out) + a dicarboxylate(in) = (indol-3-yl)acetate(in) + a dicarboxylate(out). It catalyses the reaction indoxyl sulfate(out) + a dicarboxylate(in) = indoxyl sulfate(in) + a dicarboxylate(out). It carries out the reaction N-benzoylglycine(out) + a dicarboxylate(in) = N-benzoylglycine(in) + a dicarboxylate(out). The catalysed reaction is 3-carboxy-4-methyl-5-propyl-2-furanpropanoate(out) + a dicarboxylate(in) = 3-carboxy-4-methyl-5-propyl-2-furanpropanoate(in) + a dicarboxylate(out). In terms of biological role, secondary active transporter that functions as a Na(+)-independent organic anion (OA)/dicarboxylate antiporter where the uptake of one molecule of OA into the cell is coupled with an efflux of one molecule of intracellular dicarboxylate such as 2-oxoglutarate or glutarate. Mediates the uptake of OA across the basolateral side of proximal tubule epithelial cells, thereby contributing to the renal elimination of endogenous OA from the systemic circulation into the urine. Functions as a biopterin transporters involved in the uptake and the secretion of coenzymes tetrahydrobiopterin (BH4), dihydrobiopterin (BH2) and sepiapterin to urine, thereby determining baseline levels of blood biopterins. Transports prostaglandin E2 (PGE2) and prostaglandin F2-alpha (PGF2-alpha) and may contribute to their renal excretion. Also mediates the uptake of cyclic nucleotides such as cAMP and cGMP. Involved in the transport of neuroactive tryptophan metabolites kynurenate (KYNA) and xanthurenate (XA) and may contribute to their secretion from the brain. May transport glutamate. Also involved in the disposition of uremic toxins and potentially toxic xenobiotics by the renal organic anion secretory pathway, helping reduce their undesired toxicological effects on the body. Uremic toxins include the indoxyl sulfate (IS), hippurate/N-benzoylglycine (HA), indole acetate (IA), 3-carboxy-4- methyl-5-propyl-2-furanpropionate (CMPF) and urate. Xenobiotics include the mycotoxin ochratoxin (OTA). May also contribute to the transport of organic compounds in testes across the blood-testis-barrier. The chain is Solute carrier family 22 member 6 from Macaca fascicularis (Crab-eating macaque).